A 618-amino-acid polypeptide reads, in one-letter code: Isocitrate dehydrogenase kinase/phosphatase (618 aa).

ATP-binding positions include 332–338 (APGIKGM) and Lys353. The active site involves Asp388.

It belongs to the AceK family.

The protein resides in the cytoplasm. It catalyses the reaction L-seryl-[isocitrate dehydrogenase] + ATP = O-phospho-L-seryl-[isocitrate dehydrogenase] + ADP + H(+). Bifunctional enzyme which can phosphorylate or dephosphorylate isocitrate dehydrogenase (IDH) on a specific serine residue. This is a regulatory mechanism which enables bacteria to bypass the Krebs cycle via the glyoxylate shunt in response to the source of carbon. When bacteria are grown on glucose, IDH is fully active and unphosphorylated, but when grown on acetate or ethanol, the activity of IDH declines drastically concomitant with its phosphorylation. The protein is Isocitrate dehydrogenase kinase/phosphatase of Methylibium petroleiphilum (strain ATCC BAA-1232 / LMG 22953 / PM1).